A 288-amino-acid polypeptide reads, in one-letter code: MASEKQKQHAQPGKEHVMESSPQFSSSDYQPSNKLRGKVALITGGDSGIGRAVGYCFASEGATVAFTYVKGQEEKDAQETLQMLKEVKTSDSKEPIAIPTDLGFDENCKRVVDEVVNAFGRIDVLINNAAEQYESSTIEEIDEPRLERVFRTNIFSYFFLTRHALKHMKEGSSIINTTSVNAYKGNASLLDYTATKGAIVAFTRGLALQLAEKGIRVNGVAPGPIWTPLIPASFNEEKIKNFGSEVPMKRAGQPIEVAPSYVFLACNHCSSYFTGQVLHPNGGAVVNA.

Basic and acidic residues predominate over residues 1-18 (MASEKQKQHAQPGKEHVM). A disordered region spans residues 1 to 32 (MASEKQKQHAQPGKEHVMESSPQFSSSDYQPS). A compositionally biased stretch (polar residues) spans 20 to 32 (SSPQFSSSDYQPS). 47–71 (SGIGRAVGYCFASEGATVAFTYVKG) provides a ligand contact to NADP(+). Ser-179 is a substrate binding site. The Proton acceptor role is filled by Tyr-192.

It belongs to the short-chain dehydrogenases/reductases (SDR) family.

It is found in the plastid. Its subcellular location is the chloroplast. In terms of biological role, aldehyde reductase that catalyzes the reduction of the aldehyde carbonyl groups on saturated and alpha,beta-unsaturated aldehydes with more than 5 carbons. No activity on alpha,beta-unsaturated ketones. Can use propionaldehyde, butyraldehyde, methylglyoxal, (e)-2-pentenal, (E)-2-hexenal, (Z)-3-hexenal and (E)-2-nonenal as substrates, but not propenal (acrolein), crotonaldehyde, 2-butanone, 3-buten-2-one or 1-penten-3-one. May act as a short alcohol-polyol-sugar dehydrogenase possibly related to carbohydrate metabolism and the acquisition of desiccation tolerance. May also be involved in signal transduction. The polypeptide is NADPH-dependent aldehyde reductase 1, chloroplastic (Arabidopsis thaliana (Mouse-ear cress)).